The sequence spans 69 residues: uncharacterized protein (69 aa).

This is an uncharacterized protein from Bacillus subtilis (strain 168).